A 167-amino-acid chain; its full sequence is 16S rRNA aminocarboxypropyltransferase (167 aa).

The S-adenosyl-L-methionine site is built by Thr-17, Val-62, Leu-84, Tyr-99, and Ser-103.

The protein belongs to the TDD superfamily. TSR3 family.

Its subcellular location is the cytoplasm. It carries out the reaction an N(1)-methylpseudouridine in rRNA + S-adenosyl-L-methionine = N(1)-methyl-N(3)-[(3S)-3-amino-3-carboxypropyl]pseudouridine in rRNA + S-methyl-5'-thioadenosine + H(+). Its function is as follows. Aminocarboxypropyltransferase that catalyzes the aminocarboxypropyl transfer on pseudouridine corresponding to position 914 in M.jannaschii 16S rRNA. It constitutes the last step in biosynthesis of the hypermodified N1-methyl-N3-(3-amino-3-carboxypropyl) pseudouridine (m1acp3-Psi). This Sulfurisphaera tokodaii (strain DSM 16993 / JCM 10545 / NBRC 100140 / 7) (Sulfolobus tokodaii) protein is 16S rRNA aminocarboxypropyltransferase.